A 521-amino-acid chain; its full sequence is FAD-dependent monooxygenase mdpD (521 aa).

The interval 1 to 48 (MTHFPVNIASDKQEFDPERWAKTPTTESSVNGENGTAPTSGLPSRHPS) is disordered. The segment covering 11-21 (DKQEFDPERWA) has biased composition (basic and acidic residues). Residues 23–48 (TPTTESSVNGENGTAPTSGLPSRHPS) are compositionally biased toward polar residues. The FAD site is built by Val-94 and Arg-160. Residues Arg-244 and Tyr-271 contribute to the active site. Residues Asp-369 and Gly-382 each contribute to the FAD site.

Belongs to the paxM FAD-dependent monooxygenase family. FAD serves as cofactor.

Its pathway is secondary metabolite biosynthesis. FAD-dependent monooxygenase; part of the gene cluster that mediates the biosynthesis of monodictyphenone, a prenyl xanthone derivative. The pathway begins with the synthesis of atrochrysone thioester by the polyketide synthase (PKS) mdpG. The atrochrysone carboxyl ACP thioesterase mdpF then breaks the thioester bond and releases the atrochrysone carboxylic acid from mdpG. The atrochrysone carboxylic acid is then converted to atrochrysone which is further transformed into emodin anthrone. The next step is performed by the anthrone oxygenase mdpH that catalyzes the oxidation of emodinanthrone to emodin. Emodin is further modified to yield monodictyphenone via several steps involving mdpB, mdpC mdpJ, mdpK and mdpL. These enzymes with xptA, xptB and xptC are also proposed to be involved in the synthesis of shamixanthone from emodin. Especially, direct reduction of emodin by the short chain dehydrogenase mdpC followed by dehydration catalyzed by the scytalone dehydratase-like protein mdpB gives loss of oxygen and formation of chrysophanol intermediate in two simple steps. This chain is FAD-dependent monooxygenase mdpD, found in Emericella nidulans (strain FGSC A4 / ATCC 38163 / CBS 112.46 / NRRL 194 / M139) (Aspergillus nidulans).